We begin with the raw amino-acid sequence, 210 residues long: Na(+)-translocating NADH-quinone reductase subunit D (210 aa).

6 helical membrane-spanning segments follow: residues 14–34, 42–62, 72–92, 103–123, 131–151, and 178–198; these read PIVN…ALAV, LVMA…ISMI, IIVQ…LLQA, VFVG…AYAM, FMDG…VGFV, and NGLL…IWII.

It belongs to the NqrDE/RnfAE family. Composed of six subunits; NqrA, NqrB, NqrC, NqrD, NqrE and NqrF.

It is found in the cell inner membrane. The catalysed reaction is a ubiquinone + n Na(+)(in) + NADH + H(+) = a ubiquinol + n Na(+)(out) + NAD(+). NQR complex catalyzes the reduction of ubiquinone-1 to ubiquinol by two successive reactions, coupled with the transport of Na(+) ions from the cytoplasm to the periplasm. NqrA to NqrE are probably involved in the second step, the conversion of ubisemiquinone to ubiquinol. The sequence is that of Na(+)-translocating NADH-quinone reductase subunit D from Shewanella sp. (strain ANA-3).